The following is a 512-amino-acid chain: Ferrochelatase-2, chloroplastic (512 aa).

Residues 1–32 (MNCPAMTASPSSSSSSSYSTFRPPPPLLPQLS) form a disordered region. The N-terminal 83 residues, 1–83 (MNCPAMTASP…SNPLNISSSS (83 aa)), are a transit peptide targeting the chloroplast. Residues 9–21 (SPSSSSSSSYSTF) are compositionally biased toward low complexity. Position 84 is an N-acetylvaline (Val84).

Belongs to the ferrochelatase family. As to expression, expressed in leaves and flowers.

It is found in the plastid. It localises to the chloroplast membrane. The protein resides in the chloroplast thylakoid membrane. It carries out the reaction heme b + 2 H(+) = protoporphyrin IX + Fe(2+). It functions in the pathway porphyrin-containing compound metabolism; protoheme biosynthesis; protoheme from protoporphyrin-IX: step 1/1. Its function is as follows. Catalyzes the last step of heme biosynthesis by inserting ferrous iron into protoporphyrin IX to produce protoheme. Produces heme for photosynthetic cytochromes, and for proteins involved in abiotic and biotic stress responses. May play a role in the quality control of individual chloroplasts during photo-oxidative stress through regulation of heme biosynthesis. In Arabidopsis thaliana (Mouse-ear cress), this protein is Ferrochelatase-2, chloroplastic.